The following is a 182-amino-acid chain: Ribosome-recycling factor (182 aa).

It belongs to the RRF family.

It is found in the cytoplasm. In terms of biological role, responsible for the release of ribosomes from messenger RNA at the termination of protein biosynthesis. May increase the efficiency of translation by recycling ribosomes from one round of translation to another. This chain is Ribosome-recycling factor, found in Thermosynechococcus vestitus (strain NIES-2133 / IAM M-273 / BP-1).